A 177-amino-acid polypeptide reads, in one-letter code: Peptide methionine sulfoxide reductase MsrA (177 aa).

Residue cysteine 15 is part of the active site.

This sequence belongs to the MsrA Met sulfoxide reductase family.

The enzyme catalyses L-methionyl-[protein] + [thioredoxin]-disulfide + H2O = L-methionyl-(S)-S-oxide-[protein] + [thioredoxin]-dithiol. It carries out the reaction [thioredoxin]-disulfide + L-methionine + H2O = L-methionine (S)-S-oxide + [thioredoxin]-dithiol. Has an important function as a repair enzyme for proteins that have been inactivated by oxidation. Catalyzes the reversible oxidation-reduction of methionine sulfoxide in proteins to methionine. The polypeptide is Peptide methionine sulfoxide reductase MsrA (Listeria welshimeri serovar 6b (strain ATCC 35897 / DSM 20650 / CCUG 15529 / CIP 8149 / NCTC 11857 / SLCC 5334 / V8)).